An 827-amino-acid polypeptide reads, in one-letter code: Leucine--tRNA ligase (827 aa).

Positions 42-52 (PYPSGKLHMGH) match the 'HIGH' region motif. Residues 581–585 (KMSKS) carry the 'KMSKS' region motif. Residue Lys584 coordinates ATP.

This sequence belongs to the class-I aminoacyl-tRNA synthetase family.

It localises to the cytoplasm. It catalyses the reaction tRNA(Leu) + L-leucine + ATP = L-leucyl-tRNA(Leu) + AMP + diphosphate. The chain is Leucine--tRNA ligase from Desulforamulus reducens (strain ATCC BAA-1160 / DSM 100696 / MI-1) (Desulfotomaculum reducens).